The chain runs to 309 residues: MTKTFIFGHKNPDTDAISSALIMADFEQQTGNTEAKAYRLGEISAETQFALDYFNVEAPELLNEDLKGQDVILVDHNEFQQSADTISNATIKHVIDHHRISNFETAGPLYYRAEPVGCSATILYKMYKERGFEIKPEIAGLMISAIISDSLLFKSPTCTKEDVDAAQALKDIANVDLEAYGLEMLKAGASTTDKSAETLVNMDAKSFNMGDYVTRIAQVNTVDIDEVLDRKEEFEKVMLEMSANEKYDLFVLVVTDIINSDSKILVVGAEKDKVGEAFKVQLDDGMAFLSGVVSRKKQVVPQITEVLTQ.

Mn(2+) contacts are provided by His9, Asp13, Asp15, Asp75, His97, and Asp149.

Belongs to the PPase class C family. Requires Mn(2+) as cofactor.

Its subcellular location is the cytoplasm. It catalyses the reaction diphosphate + H2O = 2 phosphate + H(+). The protein is Probable manganese-dependent inorganic pyrophosphatase of Staphylococcus epidermidis (strain ATCC 12228 / FDA PCI 1200).